Reading from the N-terminus, the 214-residue chain is Thymidylate kinase (214 aa).

10-17 (GPDGAGKT) serves as a coordination point for ATP.

The protein belongs to the thymidylate kinase family.

It carries out the reaction dTMP + ATP = dTDP + ADP. Phosphorylation of dTMP to form dTDP in both de novo and salvage pathways of dTTP synthesis. The protein is Thymidylate kinase of Levilactobacillus brevis (strain ATCC 367 / BCRC 12310 / CIP 105137 / JCM 1170 / LMG 11437 / NCIMB 947 / NCTC 947) (Lactobacillus brevis).